Here is a 236-residue protein sequence, read N- to C-terminus: Small ribosomal subunit protein uS3 (236 aa).

A KH type-2 domain is found at 39–107 (IRKFLKKELY…EISINIKEVK (69 aa)). A compositionally biased stretch (basic and acidic residues) spans 213-229 (QPEKKEEAPARDKEGRG). A disordered region spans residues 213 to 236 (QPEKKEEAPARDKEGRGTRRRGRQ).

Belongs to the universal ribosomal protein uS3 family. As to quaternary structure, part of the 30S ribosomal subunit. Forms a tight complex with proteins S10 and S14.

In terms of biological role, binds the lower part of the 30S subunit head. Binds mRNA in the 70S ribosome, positioning it for translation. This Wolinella succinogenes (strain ATCC 29543 / DSM 1740 / CCUG 13145 / JCM 31913 / LMG 7466 / NCTC 11488 / FDC 602W) (Vibrio succinogenes) protein is Small ribosomal subunit protein uS3.